The chain runs to 725 residues: Ribonuclease Y (725 aa).

Residues 4–24 (VLVILLSLVLLVLVALILAVA) traverse the membrane as a helical segment. 3 disordered regions span residues 62-140 (DGPA…ASDT), 165-195 (VAAT…SVRR), and 300-321 (EQRV…AGRE). Composition is skewed to low complexity over residues 84-100 (DAPG…PDAG) and 114-137 (AAAP…PADA). One can recognise a KH domain in the interval 415–481 (VVTVLHLPGD…RITLAALVSD (67 aa)). Residues 541-634 (VLAHLIESAH…TQAADQISGG (94 aa)) enclose the HD domain.

Belongs to the RNase Y family.

It is found in the cell membrane. In terms of biological role, endoribonuclease that initiates mRNA decay. The protein is Ribonuclease Y of Frankia alni (strain DSM 45986 / CECT 9034 / ACN14a).